Reading from the N-terminus, the 390-residue chain is Transforming growth factor beta-1 proprotein (390 aa).

An N-terminal signal peptide occupies residues 1–29 (MPPSGLRLLPLLLPLLRLLVLTPGRPAAG). Residues 30 to 74 (LSTCKTIDMELVKRKRIEAIRGQILSKLRLSSPPSQGEVPPVPLP) are straightjacket domain. The tract at residues 75–271 (EAVLALYNST…ATPLERAQHL (197 aa)) is arm domain. N-linked (GlcNAc...) asparagine glycosylation is found at Asn82, Asn136, and Asn176. Residues 226–252 (DSKDNTLQVDINGFSSSRRGDLATIHG) are bowtie tail. A Cell attachment site motif is present at residues 244 to 246 (RGD). 4 disulfides stabilise this stretch: Cys285-Cys294, Cys293-Cys356, Cys322-Cys387, and Cys326-Cys389.

The protein belongs to the TGF-beta family. In terms of assembly, homodimer; disulfide-linked. Interacts with the serine proteases, HTRA1 and HTRA3: the interaction with either inhibits TGFB1-mediated signaling and the HTRA protease activity is required for this inhibition. May interact with THSD4; this interaction may lead to sequestration by FBN1 microfibril assembly and attenuation of TGFB signaling. Interacts with CD109, DPT and ASPN. Interacts with EFEMP2. Interacts with TSKU; the interaction contributes to regulation of the hair cycle. Interacts with TGFBR3. As to quaternary structure, homodimer; disulfide-linked. Interacts with transforming growth factor beta-1 (TGF-beta-1) chain; interaction is non-covalent and maintains TGF-beta-1 in a latent state; each latency-associated peptide (LAP) monomer interacts with TGF-beta-1 in the other monomer. Interacts with LTBP1; leading to regulation of TGF-beta-1 activation. Interacts with LRRC32/GARP; leading to regulation of TGF-beta-1 activation on the surface of activated regulatory T-cells (Tregs). Interacts with LRRC33/NRROS; leading to regulation of TGF-beta-1 activation in macrophages and microglia. Interacts (via cell attachment site) with integrins ITGAV and ITGB6 (ITGAV:ITGB6), leading to release of the active TGF-beta-1. Interacts with NREP; the interaction results in a decrease in TGFB1 autoinduction. Interacts with HSP90AB1; inhibits latent TGFB1 activation. Homodimer; disulfide-linked. Interacts with TGF-beta receptors (TGFBR1 and TGFBR2), leading to signal transduction. Post-translationally, transforming growth factor beta-1 proprotein: The precursor proprotein is cleaved in the Golgi apparatus by FURIN to form Transforming growth factor beta-1 (TGF-beta-1) and Latency-associated peptide (LAP) chains, which remain non-covalently linked, rendering TGF-beta-1 inactive. N-glycosylated. Deglycosylation leads to activation of Transforming growth factor beta-1 (TGF-beta-1); mechanisms triggering deglycosylation-driven activation of TGF-beta-1 are however unclear.

Its subcellular location is the secreted. It is found in the extracellular space. The protein resides in the extracellular matrix. In terms of biological role, transforming growth factor beta-1 proprotein: Precursor of the Latency-associated peptide (LAP) and Transforming growth factor beta-1 (TGF-beta-1) chains, which constitute the regulatory and active subunit of TGF-beta-1, respectively. Required to maintain the Transforming growth factor beta-1 (TGF-beta-1) chain in a latent state during storage in extracellular matrix. Associates non-covalently with TGF-beta-1 and regulates its activation via interaction with 'milieu molecules', such as LTBP1, LRRC32/GARP and LRRC33/NRROS, that control activation of TGF-beta-1. Interaction with LRRC33/NRROS regulates activation of TGF-beta-1 in macrophages and microglia. Interaction with LRRC32/GARP controls activation of TGF-beta-1 on the surface of activated regulatory T-cells (Tregs). Interaction with integrins (ITGAV:ITGB6 or ITGAV:ITGB8) results in distortion of the Latency-associated peptide chain and subsequent release of the active TGF-beta-1. Its function is as follows. Multifunctional protein that regulates the growth and differentiation of various cell types and is involved in various processes, such as normal development, immune function, microglia function and responses to neurodegeneration. Activation into mature form follows different steps: following cleavage of the proprotein in the Golgi apparatus, Latency-associated peptide (LAP) and Transforming growth factor beta-1 (TGF-beta-1) chains remain non-covalently linked rendering TGF-beta-1 inactive during storage in extracellular matrix. At the same time, LAP chain interacts with 'milieu molecules', such as LTBP1, LRRC32/GARP and LRRC33/NRROS that control activation of TGF-beta-1 and maintain it in a latent state during storage in extracellular milieus. TGF-beta-1 is released from LAP by integrins (ITGAV:ITGB6 or ITGAV:ITGB8): integrin-binding to LAP stabilizes an alternative conformation of the LAP bowtie tail and results in distortion of the LAP chain and subsequent release of the active TGF-beta-1. Once activated following release of LAP, TGF-beta-1 acts by binding to TGF-beta receptors (TGFBR1 and TGFBR2), which transduce signal. While expressed by many cells types, TGF-beta-1 only has a very localized range of action within cell environment thanks to fine regulation of its activation by Latency-associated peptide chain (LAP) and 'milieu molecules'. Plays an important role in bone remodeling: acts as a potent stimulator of osteoblastic bone formation, causing chemotaxis, proliferation and differentiation in committed osteoblasts. Can promote either T-helper 17 cells (Th17) or regulatory T-cells (Treg) lineage differentiation in a concentration-dependent manner. At high concentrations, leads to FOXP3-mediated suppression of RORC and down-regulation of IL-17 expression, favoring Treg cell development. At low concentrations in concert with IL-6 and IL-21, leads to expression of the IL-17 and IL-23 receptors, favoring differentiation to Th17 cells. Stimulates sustained production of collagen through the activation of CREB3L1 by regulated intramembrane proteolysis (RIP). Mediates SMAD2/3 activation by inducing its phosphorylation and subsequent translocation to the nucleus. Positively regulates odontoblastic differentiation in dental papilla cells, via promotion of IPO7-mediated translocation of phosphorylated SMAD2 to the nucleus and subsequent transcription of target genes. Can induce epithelial-to-mesenchymal transition (EMT) and cell migration in various cell types. This Canis lupus familiaris (Dog) protein is Transforming growth factor beta-1 proprotein (TGFB1).